A 376-amino-acid chain; its full sequence is Ribonuclease D (376 aa).

The 169-residue stretch at 8–176 folds into the 3'-5' exonuclease domain; the sequence is IQWIRDDASL…VYLALDARLS (169 aa). In terms of domain architecture, HRDC spans 214–294; sequence RPQQLAVLRE…AEAARLPQSE (81 aa).

This sequence belongs to the RNase D family. A divalent metal cation is required as a cofactor.

It localises to the cytoplasm. The enzyme catalyses Exonucleolytic cleavage that removes extra residues from the 3'-terminus of tRNA to produce 5'-mononucleotides.. In terms of biological role, exonuclease involved in the 3' processing of various precursor tRNAs. Initiates hydrolysis at the 3'-terminus of an RNA molecule and releases 5'-mononucleotides. This is Ribonuclease D from Pseudomonas paraeruginosa (strain DSM 24068 / PA7) (Pseudomonas aeruginosa (strain PA7)).